Consider the following 118-residue polypeptide: UPF0102 protein CMM_1377 (118 aa).

Belongs to the UPF0102 family.

The protein is UPF0102 protein CMM_1377 of Clavibacter michiganensis subsp. michiganensis (strain NCPPB 382).